The primary structure comprises 138 residues: Large-conductance mechanosensitive channel (138 aa).

3 consecutive transmembrane segments (helical) span residues valine 19 to isoleucine 39, methionine 40 to serine 60, and glycine 81 to isoleucine 101.

The protein belongs to the MscL family. Homopentamer.

It is found in the cell inner membrane. Functionally, channel that opens in response to stretch forces in the membrane lipid bilayer. May participate in the regulation of osmotic pressure changes within the cell. The sequence is that of Large-conductance mechanosensitive channel from Afipia carboxidovorans (strain ATCC 49405 / DSM 1227 / KCTC 32145 / OM5) (Oligotropha carboxidovorans).